A 397-amino-acid polypeptide reads, in one-letter code: Elongation factor Tu (397 aa).

Residues 10–207 enclose the tr-type G domain; that stretch reads KPHVNVGTIG…TLDSYIPEPV (198 aa). Positions 19 to 26 are G1; that stretch reads GHVDHGKT. A GTP-binding site is contributed by 19–26; sequence GHVDHGKT. Position 26 (T26) interacts with Mg(2+). The segment at 60–64 is G2; sequence GITIN. Phosphotyrosine is present on Y77. Positions 81-84 are G3; it reads DCPG. 81-85 serves as a coordination point for GTP; that stretch reads DCPGH. Y88 bears the Phosphotyrosine mark. 136 to 139 is a binding site for GTP; sequence NKAD. The interval 136-139 is G4; that stretch reads NKAD. Residues 174-176 form a G5 region; that stretch reads SAL.

The protein belongs to the TRAFAC class translation factor GTPase superfamily. Classic translation factor GTPase family. EF-Tu/EF-1A subfamily. In terms of assembly, monomer.

The protein resides in the cytoplasm. The catalysed reaction is GTP + H2O = GDP + phosphate + H(+). In terms of biological role, GTP hydrolase that promotes the GTP-dependent binding of aminoacyl-tRNA to the A-site of ribosomes during protein biosynthesis. This Pseudomonas aeruginosa (strain UCBPP-PA14) protein is Elongation factor Tu.